We begin with the raw amino-acid sequence, 195 residues long: Lipid A acyltransferase PagP (195 aa).

A signal peptide spans 1–30 (MRLTLTSRSRLFVLSSLLFISTFDVLSAQA). Active-site residues include histidine 67, aspartate 110, and serine 111.

It belongs to the lipid A palmitoyltransferase family. As to quaternary structure, homodimer.

Its subcellular location is the cell outer membrane. It catalyses the reaction a lipid A + a 1,2-diacyl-sn-glycero-3-phosphocholine = a hepta-acyl lipid A + a 2-acyl-sn-glycero-3-phosphocholine. It carries out the reaction a lipid IVA + a 1,2-diacyl-sn-glycero-3-phosphocholine = a lipid IVB + a 2-acyl-sn-glycero-3-phosphocholine. The enzyme catalyses a lipid IIA + a 1,2-diacyl-sn-glycero-3-phosphocholine = a lipid IIB + a 2-acyl-sn-glycero-3-phosphocholine. Its function is as follows. Transfers a fatty acid residue from the sn-1 position of a phospholipid to the N-linked hydroxyfatty acid chain on the proximal unit of lipid A or its precursors. The polypeptide is Lipid A acyltransferase PagP (Dickeya chrysanthemi (strain Ech1591) (Dickeya zeae (strain Ech1591))).